Reading from the N-terminus, the 126-residue chain is Putative phosphotransferase enzyme IIB component UU178 (126 aa).

A helical membrane pass occupies residues 11–31 (LIIFLGIITFGIFIIYFFTKA). The region spanning 49 to 126 (PFSLNDFYNC…KELIKKDLFS (78 aa)) is the PTS EIIB type-1 domain.

It to M.genitalium MG129 and M.pneumoniae MPN268.

The protein localises to the membrane. The phosphoenolpyruvate-dependent sugar phosphotransferase system (PTS), a major carbohydrate active -transport system, catalyzes the phosphorylation of incoming sugar substrates concomitant with their translocation across the cell membrane. This chain is Putative phosphotransferase enzyme IIB component UU178, found in Ureaplasma parvum serovar 3 (strain ATCC 700970).